A 202-amino-acid polypeptide reads, in one-letter code: MDPKDRKKIQFSVPAPPSQLDPRQVEMIRRRRPTPAMLFRLSEHSSPEEEASPHQRASGEGHHLKSKRSNPCAYTPPSLKAVQRIAESHLQSISNLGENQASEEEDELGELRELGYPREEEEEEEEEDEEEEEDSQAEVLKGSRGSAGQKTTYGQGLEGPWERPPPLDGPQRDGSSEDQVEDPALNEPGEEPQRPAHPEPGT.

Met1 carries the post-translational modification N-acetylmethionine. The disordered stretch occupies residues 1 to 202 (MDPKDRKKIQ…QRPAHPEPGT (202 aa)). Thr34 is modified (phosphothreonine; by PKA). Over residues 41–63 (LSEHSSPEEEASPHQRASGEGHH) the composition is skewed to basic and acidic residues. Ser45 and Ser46 each carry phosphoserine. Thr75 carries the post-translational modification Phosphothreonine; by CDK5. Polar residues predominate over residues 89-100 (HLQSISNLGENQ). The residue at position 102 (Ser102) is a Phosphoserine. Basic and acidic residues predominate over residues 109–118 (GELRELGYPR). Residues 119–136 (EEEEEEEEEDEEEEEDSQ) are compositionally biased toward acidic residues. Position 135 is a phosphoserine (Ser135). Over residues 191 to 202 (EPQRPAHPEPGT) the composition is skewed to basic and acidic residues.

Belongs to the protein phosphatase inhibitor 1 family. Dopamine- and cyclic AMP-regulated neuronal phosphoprotein. In terms of processing, phosphorylation of Thr-34 is required for activity.

It localises to the cytoplasm. Its function is as follows. Inhibitor of protein-phosphatase 1. The polypeptide is Protein phosphatase 1 regulatory subunit 1B (PPP1R1B) (Bos taurus (Bovine)).